The primary structure comprises 38 residues: MKVRASVKPRCEYCRVIKRKGVLRVICSRQPKHKQRQG.

This sequence belongs to the bacterial ribosomal protein bL36 family.

The polypeptide is Large ribosomal subunit protein bL36 (Roseiflexus sp. (strain RS-1)).